The following is a 250-amino-acid chain: 5'-nucleotidase SurE (250 aa).

Residues Asp-8, Asp-9, Ser-39, and Asn-91 each coordinate a divalent metal cation.

Belongs to the SurE nucleotidase family. It depends on a divalent metal cation as a cofactor.

The protein localises to the cytoplasm. The enzyme catalyses a ribonucleoside 5'-phosphate + H2O = a ribonucleoside + phosphate. Its function is as follows. Nucleotidase that shows phosphatase activity on nucleoside 5'-monophosphates. In Leptospira borgpetersenii serovar Hardjo-bovis (strain JB197), this protein is 5'-nucleotidase SurE.